Here is an 87-residue protein sequence, read N- to C-terminus: MMMKFINIGYGNMVSAARIITIVSPDSAPIKRIIQDARESGKLVDATHGRRTRAVIIMDSDHVILSSVQPETVANRLYGSDDFSEEG.

The protein belongs to the RemA family.

This is Putative regulatory protein GK1166 from Geobacillus kaustophilus (strain HTA426).